Consider the following 141-residue polypeptide: Large ribosomal subunit protein uL16 (141 aa).

This sequence belongs to the universal ribosomal protein uL16 family. In terms of assembly, part of the 50S ribosomal subunit.

Functionally, binds 23S rRNA and is also seen to make contacts with the A and possibly P site tRNAs. The chain is Large ribosomal subunit protein uL16 from Campylobacter fetus subsp. fetus (strain 82-40).